The sequence spans 906 residues: Ribonucleoside-diphosphate reductase large subunit-like protein (906 aa).

Disordered regions lie at residues 1–70 (MNPA…AGNT) and 89–129 (VSWR…LSTF). The span at 98–109 (PDGTPSVLSLTR) shows a compositional bias: polar residues.

This sequence belongs to the ribonucleoside diphosphate reductase large chain family.

Its subcellular location is the virion. It localises to the host cytoplasm. Does not possess a ribonucleotide reductase activity. Betaherpesviruses probably use another strategy to expand the dNTP pool in a quiescent host cell. The chain is Ribonucleoside-diphosphate reductase large subunit-like protein from Homo sapiens (Human).